The chain runs to 430 residues: Purine nucleoside phosphorylase LACC1 (430 aa).

K247 is subject to N6-acetyllysine. 3 residues coordinate Zn(2+): H250, C284, and H301.

Belongs to the purine nucleoside phosphorylase YfiH/LACC1 family. In terms of assembly, interacts with FASN. Interacts with SDHA. Interacts with ATF6, EIF2AK3 and ERN1. Phosphorylated on tyrosine residues. Ubiquitously expressed, with higher expression levels in immune-related tissues such as lymph nodes and spleen. Expressed in both intestinal and peripheral myeloid-derived cells.

It is found in the cytoplasm. It localises to the nucleus. The protein resides in the endoplasmic reticulum. The protein localises to the peroxisome. It catalyses the reaction adenosine + phosphate = alpha-D-ribose 1-phosphate + adenine. It carries out the reaction inosine + phosphate = alpha-D-ribose 1-phosphate + hypoxanthine. The catalysed reaction is guanosine + phosphate = alpha-D-ribose 1-phosphate + guanine. The enzyme catalyses S-methyl-5'-thioadenosine + phosphate = 5-(methylsulfanyl)-alpha-D-ribose 1-phosphate + adenine. It catalyses the reaction adenosine + H2O + H(+) = inosine + NH4(+). Its function is as follows. Purine nucleoside enzyme that catalyzes the phosphorolysis of adenosine, guanosine and inosine nucleosides, yielding D-ribose 1-phosphate and the respective free bases, adenine, guanine and hypoxanthine. Also catalyzes the phosphorolysis of S-methyl-5'-thioadenosine into adenine and S-methyl-5-thio-alpha-D-ribose 1-phosphate. Also has adenosine deaminase activity. Acts as a regulator of innate immunity in macrophages by modulating the purine nucleotide metabolism, thereby regulating the metabolic function and bioenergetic state of macrophages. Enables a purine nucleotide cycle between adenosine and inosine monophosphate and adenylosuccinate that prevents cytoplasmic acidification and balances the cytoplasmic-mitochondrial redox interface. The purine nucleotide cycle consumes aspartate and releases fumarate in a manner involving fatty acid oxidation and ATP-citrate lyase activity. Participates in pattern recognition receptor (PRR)-induced cytokines in macrophages: associates with the NOD2-signaling complex and promotes optimal NOD2-induced signaling, cytokine secretion and bacterial clearance. Localizes to the endoplasmic reticulum upon PRR stimulation of macrophages and associates with endoplasmic reticulum-stress sensors, promoting the endoplasmic reticulum unfolded protein response (UPR). Does not show laccase activity. This is Purine nucleoside phosphorylase LACC1 from Homo sapiens (Human).